We begin with the raw amino-acid sequence, 930 residues long: Isoleucine--tRNA ligase (930 aa).

Residues 57-67 carry the 'HIGH' region motif; it reads PYANGHLHLGH. An L-isoleucyl-5'-AMP-binding site is contributed by E555. A 'KMSKS' region motif is present at residues 596–600; the sequence is KMSKS. Residue K599 coordinates ATP. C896, C899, C916, and C919 together coordinate Zn(2+).

The protein belongs to the class-I aminoacyl-tRNA synthetase family. IleS type 1 subfamily. Monomer. Requires Zn(2+) as cofactor.

Its subcellular location is the cytoplasm. It carries out the reaction tRNA(Ile) + L-isoleucine + ATP = L-isoleucyl-tRNA(Ile) + AMP + diphosphate. Functionally, catalyzes the attachment of isoleucine to tRNA(Ile). As IleRS can inadvertently accommodate and process structurally similar amino acids such as valine, to avoid such errors it has two additional distinct tRNA(Ile)-dependent editing activities. One activity is designated as 'pretransfer' editing and involves the hydrolysis of activated Val-AMP. The other activity is designated 'posttransfer' editing and involves deacylation of mischarged Val-tRNA(Ile). This Moorella thermoacetica (strain ATCC 39073 / JCM 9320) protein is Isoleucine--tRNA ligase.